The sequence spans 715 residues: MARELYHEEFARAGKQAGLQVWRIEKLELVPVPQSAHGDFYVGDAYLVLHTAKTSRGFTYHLHFWLGKECSQDESTAAAIFTVQMDDYLGGKPVQNRELQGYESNDFVSYFKGGLKYKAGGVASGLNHVLTNDLTAKRLLHVKGRRVVRATEVPLSWDSFNKGDCFIIDLGTEIYQWCGSSCNKYERLKANQVATGIRYNERKGRSELIVVEEGSEPSELIKVLGEKPELPDGGDDDDIIADISNRKMAKLYMVSDASGSMRVTVVAEENPFSMAMLLSEECFILDHGAAKQIFVWKGKDANPQERKAAMKTAEEFLQQMNYSKNTQIQVLPEGGETPIFKQFFKDWRDKDQSDGFGKVYVTEKVAQIKQIPFDASKLHSSPQMAAQHNMVDDGSGKVEIWRVENNGRIQVDQNSYGEFYGGDCYIILYTYPRGQIIYTWQGANATRDELTTSAFLTVQLDRSLGGQAVQIRVSQGKEPVHLLSLFKDKPLIIYKNGTSKKGGQAPAPPTRLFQVRRNLASITRIVEVDVDANSLNSNDVFVLKLPQNSGYIWVGKGASQEEEKGAEYVASVLKCKTLRIQEGEEPEEFWNSLGGKKDYQTSPLLETQAEDHPPRLYGCSNKTGRFVIEEIPGEFTQDDLAEDDVMLLDAWEQIFIWIGKDANEVEKKESLKSAKMYLETDPSGRDKRTPIVIIKQGHEPPTFTGWFLGWDSSKW.

The tract at residues 1 to 363 is actin-severing; the sequence is MARELYHEEF…DGFGKVYVTE (363 aa). One copy of the Gelsolin-like 1 repeat lies at 27 to 76; that stretch reads LELVPVPQSAHGDFYVGDAYLVLHTAKTSRGFTYHLHFWLGKECSQDEST. Y102 is modified (phosphotyrosine). Residues 112–119 and 138–146 contribute to the a 1,2-diacyl-sn-glycero-3-phospho-(1D-myo-inositol-4,5-bisphosphate) site; these read KGGLKYKA and RLLHVKGRR. Gelsolin-like repeat units follow at residues 148–188, 265–307, 398–451, and 523–564; these read VRAT…YERL, VVAE…QERK, VEIW…DELT, and TRIV…EEEK. Residues 364–715 form a ca(2+)-dependent actin binding region; that stretch reads KVAQIKQIPF…WFLGWDSSKW (352 aa). Residues N538, D539, and E562 each contribute to the Ca(2+) site. Y599 bears the Phosphotyrosine mark. The Gelsolin-like 6 repeat unit spans residues 626 to 668; that stretch reads FVIEEIPGEFTQDDLAEDDVMLLDAWEQIFIWIGKDANEVEKK. The Ca(2+) site is built by D643, D644, and E666.

Belongs to the villin/gelsolin family. As to expression, expressed in megakaryocytes.

The protein localises to the cytoplasm. The protein resides in the cytoskeleton. It is found in the cell projection. Its subcellular location is the podosome. Its function is as follows. Ca(2+)-dependent actin filament-severing protein that has a regulatory function in exocytosis by affecting the organization of the microfilament network underneath the plasma membrane. Severing activity is inhibited by phosphatidylinositol 4,5-bis-phosphate (PIP2). In vitro, also has barbed end capping and nucleating activities in the presence of Ca(2+). Required for megakaryocyte differentiation, maturation, polyploidization and apoptosis with the release of platelet-like particles. Plays a role in osteoclastogenesis (OCG) and actin cytoskeletal organization in osteoclasts. Regulates chondrocyte proliferation and differentiation. Inhibits cell proliferation and tumorigenesis. Signaling is mediated by MAPK, p38 and JNK pathways. The polypeptide is Scinderin (Homo sapiens (Human)).